A 785-amino-acid chain; its full sequence is Endonuclease MutS2 (785 aa).

334-341 is an ATP binding site; sequence GPNTGGKT. Residues 710–785 enclose the Smr domain; it reads LDLRGKRYEE…GNGATIVHFK (76 aa).

Belongs to the DNA mismatch repair MutS family. MutS2 subfamily. In terms of assembly, homodimer. Binds to stalled ribosomes, contacting rRNA.

Its function is as follows. Endonuclease that is involved in the suppression of homologous recombination and thus may have a key role in the control of bacterial genetic diversity. Functionally, acts as a ribosome collision sensor, splitting the ribosome into its 2 subunits. Detects stalled/collided 70S ribosomes which it binds and splits by an ATP-hydrolysis driven conformational change. Acts upstream of the ribosome quality control system (RQC), a ribosome-associated complex that mediates the extraction of incompletely synthesized nascent chains from stalled ribosomes and their subsequent degradation. Probably generates substrates for RQC. The sequence is that of Endonuclease MutS2 from Pediococcus pentosaceus (strain ATCC 25745 / CCUG 21536 / LMG 10740 / 183-1w).